A 496-amino-acid polypeptide reads, in one-letter code: Fascin (496 aa).

It belongs to the fascin family.

The protein localises to the cytoplasm. Its subcellular location is the cytoskeleton. Functionally, acts as an actin bundling protein. The protein is Fascin of Strongylocentrotus purpuratus (Purple sea urchin).